A 513-amino-acid chain; its full sequence is 2,3-bisphosphoglycerate-independent phosphoglycerate mutase (513 aa).

Residues Asp-13 and Ser-63 each contribute to the Mn(2+) site. The Phosphoserine intermediate role is filled by Ser-63. Substrate is bound by residues His-124, 154–155 (RD), Arg-186, Arg-192, 262–265 (RADR), and Lys-335. The Mn(2+) site is built by Asp-402, His-406, Asp-443, His-444, and His-462.

This sequence belongs to the BPG-independent phosphoglycerate mutase family. Monomer. It depends on Mn(2+) as a cofactor.

It catalyses the reaction (2R)-2-phosphoglycerate = (2R)-3-phosphoglycerate. It participates in carbohydrate degradation; glycolysis; pyruvate from D-glyceraldehyde 3-phosphate: step 3/5. In terms of biological role, catalyzes the interconversion of 2-phosphoglycerate and 3-phosphoglycerate. The protein is 2,3-bisphosphoglycerate-independent phosphoglycerate mutase of Photobacterium profundum (strain SS9).